The following is a 1114-amino-acid chain: TBC1 domain family member 8B (1114 aa).

2 consecutive GRAM domains span residues 145-212 and 285-353; these read LKFE…EKTS and EQFK…DKTD. Positions 399-411 are enriched in polar residues; sequence TEVAVSSDSTGPS. The interval 399–420 is disordered; that stretch reads TEVAVSSDSTGPSENFEEQPLT. The 188-residue stretch at 486 to 673 folds into the Rab-GAP TBC domain; that stretch reads GIPETLRGEL…NVVDCFFYDG (188 aa). Positions 857–892 constitute an EF-hand domain; that stretch reads NRDSLALWTFRLLDENSDCLINFKEFSSAIDIMYNG. 2 disordered regions span residues 938 to 957 and 1032 to 1061; these read SKPA…EKGK and LHSP…KDLP. A compositionally biased stretch (basic and acidic residues) spans 940–957; that stretch reads PADEKETESGRNSPEKGK.

In terms of assembly, interacts (via domain Rab-GAP TBC) with RAB11B (in GTP-bound form).

The protein resides in the cytoplasm. It localises to the cytosol. Involved in vesicular recycling, probably as a RAB11B GTPase-activating protein. This is TBC1 domain family member 8B (Tbc1d8b) from Mus musculus (Mouse).